Reading from the N-terminus, the 128-residue chain is Sulfurtransferase TusD (128 aa).

Catalysis depends on cysteine 78, which acts as the Cysteine persulfide intermediate.

Belongs to the DsrE/TusD family. Heterohexamer, formed by a dimer of trimers. The hexameric TusBCD complex contains 2 copies each of TusB, TusC and TusD. The TusBCD complex interacts with TusE.

The protein localises to the cytoplasm. Its function is as follows. Part of a sulfur-relay system required for 2-thiolation of 5-methylaminomethyl-2-thiouridine (mnm(5)s(2)U) at tRNA wobble positions. Accepts sulfur from TusA and transfers it in turn to TusE. The protein is Sulfurtransferase TusD of Escherichia coli O7:K1 (strain IAI39 / ExPEC).